A 332-amino-acid chain; its full sequence is Large ribosomal subunit protein uL29m (332 aa).

A disordered region spans residues Arg19 to Thr40. A coiled-coil region spans residues Thr264 to Asn327.

This sequence belongs to the universal ribosomal protein uL29 family. In terms of assembly, component of the mitochondrial large ribosomal subunit. Mature mitochondrial ribosomes consist of a small (37S) and a large (54S) subunit. The 37S subunit contains at least 33 different proteins and 1 molecule of RNA (15S). The 54S subunit contains at least 45 different proteins and 1 molecule of RNA (21S).

Its subcellular location is the mitochondrion. This Kluyveromyces lactis (strain ATCC 8585 / CBS 2359 / DSM 70799 / NBRC 1267 / NRRL Y-1140 / WM37) (Yeast) protein is Large ribosomal subunit protein uL29m (MRPL4).